Reading from the N-terminus, the 125-residue chain is Photoactive yellow protein (125 aa).

Positions 23–86 (LNQLAFGAIQ…GRFKEGVANG (64 aa)) constitute a PAS domain. Residue Cys69 is modified to S-(4-hydroxycinnamyl)cysteine.

This sequence belongs to the photoactive yellow protein family. In terms of processing, the 4-hydroxycinnamic acid (p-coumaric acid) chromophore is covalently bound via a thioester linkage.

Functionally, photoactive blue light protein. Probably functions as a photoreceptor for a negative phototaxis response. This chain is Photoactive yellow protein (pyp), found in Halochromatium salexigens (Chromatium salexigens).